The following is a 359-amino-acid chain: Glycerol-3-phosphate dehydrogenase [NAD(P)+] (359 aa).

NADPH-binding residues include Thr11, Trp12, Arg32, and Lys107. Sn-glycerol 3-phosphate is bound by residues Lys107 and Gly138. Ala142 contacts NADPH. Positions 193, 246, 256, 257, and 258 each coordinate sn-glycerol 3-phosphate. The Proton acceptor role is filled by Lys193. Arg257 serves as a coordination point for NADPH. NADPH-binding residues include Val281 and Glu283.

Belongs to the NAD-dependent glycerol-3-phosphate dehydrogenase family.

The protein localises to the cytoplasm. The catalysed reaction is sn-glycerol 3-phosphate + NAD(+) = dihydroxyacetone phosphate + NADH + H(+). It carries out the reaction sn-glycerol 3-phosphate + NADP(+) = dihydroxyacetone phosphate + NADPH + H(+). Its pathway is membrane lipid metabolism; glycerophospholipid metabolism. In terms of biological role, catalyzes the reduction of the glycolytic intermediate dihydroxyacetone phosphate (DHAP) to sn-glycerol 3-phosphate (G3P), the key precursor for phospholipid synthesis. The protein is Glycerol-3-phosphate dehydrogenase [NAD(P)+] of Dehalococcoides mccartyi (strain CBDB1).